The sequence spans 101 residues: uncharacterized protein (101 aa).

Residues 58-80 (VFPSLNIIILMSDALMFFLRSSI) traverse the membrane as a helical segment.

Its subcellular location is the membrane. This is an uncharacterized protein from Saccharomyces cerevisiae (strain ATCC 204508 / S288c) (Baker's yeast).